The primary structure comprises 392 residues: Protein trapped in endoderm-1 (392 aa).

Over 1-39 (MDQDMGMATGYFQDADMQMDEPAAATQSIYPHSATLFAA) the chain is Extracellular. A helical transmembrane segment spans residues 40-60 (ISACVFVTIGVLGNLITLLAL). At 61 to 73 (LKSPTIREHATTA) the chain is on the cytoplasmic side. A helical membrane pass occupies residues 74–94 (FVISLSISDLLFCSFSLPLTA). At 95-110 (VRFFQESWTFGTTLCK) the chain is on the extracellular side. A helical transmembrane segment spans residues 111 to 131 (IFPVIFYGNVAVSLLSMVGIT). Topologically, residues 132 to 156 (LNRYILIACHSRYSQIYKPKFITLQ) are cytoplasmic. The chain crosses the membrane as a helical span at residues 157–177 (LLFVWAVSFLLLLPPILGIWG). Residues 178–202 (EMGLDEATFSCTILKKEGRSIKKTL) are Extracellular-facing. A helical transmembrane segment spans residues 203-223 (FVIGFLLPCLVIIVSYSCIYI). At 224–268 (TVLHQKKKIRNHDNFQIAAAKGSSSSGGGSYMTTTCTRKAREDNR) the chain is on the cytoplasmic side. The helical transmembrane segment at 269 to 289 (LTVMMVTIFLCFLVCFLPLML) threads the bilayer. Residues 290–302 (ANVVDDERNTSYP) are Extracellular-facing. A glycan (N-linked (GlcNAc...) asparagine) is linked at Asn298. The chain crosses the membrane as a helical span at residues 303 to 323 (WLHIIASVMAWASSVINPIIY). The Cytoplasmic portion of the chain corresponds to 324-392 (AASNRNYRVA…INQMCQTYSV (69 aa)). Ser359, Ser362, and Ser366 each carry phosphoserine. Position 372 is a phosphothreonine (Thr372).

Belongs to the G-protein coupled receptor 1 family. In terms of tissue distribution, in embryos, expression is seen at highest levels in the cuprophilic cells and at lower levels in the amnioserosa, developing CNS, cardiac mesoderm primordium and midline glia.

It localises to the cell membrane. Its function is as follows. Essential for the first active step of germ cell migration: transepithelial migration of germ cells through the posterior midgut (PMG) epithelium. The protein is Protein trapped in endoderm-1 (Tre1) of Drosophila melanogaster (Fruit fly).